Reading from the N-terminus, the 307-residue chain is Methionyl-tRNA formyltransferase (307 aa).

108-111 (SLLP) lines the (6S)-5,6,7,8-tetrahydrofolate pocket.

Belongs to the Fmt family.

It carries out the reaction L-methionyl-tRNA(fMet) + (6R)-10-formyltetrahydrofolate = N-formyl-L-methionyl-tRNA(fMet) + (6S)-5,6,7,8-tetrahydrofolate + H(+). Functionally, attaches a formyl group to the free amino group of methionyl-tRNA(fMet). The formyl group appears to play a dual role in the initiator identity of N-formylmethionyl-tRNA by promoting its recognition by IF2 and preventing the misappropriation of this tRNA by the elongation apparatus. This Xanthomonas axonopodis pv. citri (strain 306) protein is Methionyl-tRNA formyltransferase.